We begin with the raw amino-acid sequence, 515 residues long: Protein nucleotidyltransferase YdiU (515 aa).

ATP contacts are provided by Gly101, Gly103, Arg104, Lys124, Asp136, Gly137, Arg194, and Arg201. Asp269 serves as the catalytic Proton acceptor. The Mg(2+) site is built by Asn270 and Asp279. An ATP-binding site is contributed by Asp279.

This sequence belongs to the SELO family. Mg(2+) is required as a cofactor. Mn(2+) serves as cofactor.

It carries out the reaction L-seryl-[protein] + ATP = 3-O-(5'-adenylyl)-L-seryl-[protein] + diphosphate. It catalyses the reaction L-threonyl-[protein] + ATP = 3-O-(5'-adenylyl)-L-threonyl-[protein] + diphosphate. The enzyme catalyses L-tyrosyl-[protein] + ATP = O-(5'-adenylyl)-L-tyrosyl-[protein] + diphosphate. The catalysed reaction is L-histidyl-[protein] + UTP = N(tele)-(5'-uridylyl)-L-histidyl-[protein] + diphosphate. It carries out the reaction L-seryl-[protein] + UTP = O-(5'-uridylyl)-L-seryl-[protein] + diphosphate. It catalyses the reaction L-tyrosyl-[protein] + UTP = O-(5'-uridylyl)-L-tyrosyl-[protein] + diphosphate. Its function is as follows. Nucleotidyltransferase involved in the post-translational modification of proteins. It can catalyze the addition of adenosine monophosphate (AMP) or uridine monophosphate (UMP) to a protein, resulting in modifications known as AMPylation and UMPylation. In Cytophaga hutchinsonii (strain ATCC 33406 / DSM 1761 / CIP 103989 / NBRC 15051 / NCIMB 9469 / D465), this protein is Protein nucleotidyltransferase YdiU.